A 299-amino-acid chain; its full sequence is Oxaloacetate decarboxylase (299 aa).

Serine 57 provides a ligand contact to substrate. Aspartate 95 lines the Mg(2+) pocket. Substrate is bound by residues arginine 167 and histidine 243.

This sequence belongs to the isocitrate lyase/PEP mutase superfamily. Oxaloacetate decarboxylase family. In terms of assembly, homotetramer; dimer of dimers. It depends on Mg(2+) as a cofactor.

The catalysed reaction is oxaloacetate + H(+) = pyruvate + CO2. Its function is as follows. Catalyzes the decarboxylation of oxaloacetate into pyruvate. Seems to play a role in maintaining cellular concentrations of bicarbonate and pyruvate. The chain is Oxaloacetate decarboxylase from Paraburkholderia xenovorans (strain LB400).